The sequence spans 452 residues: Bifunctional protein GlmU (452 aa).

The segment at 1 to 232 is pyrophosphorylase; the sequence is MTARNSLTIV…EDEVRGINTK (232 aa). Residues 11-14, Lys25, Gln78, and 83-84 each bind UDP-N-acetyl-alpha-D-glucosamine; these read LAAG and GT. Asp108 lines the Mg(2+) pocket. Positions 144, 158, 173, and 230 each coordinate UDP-N-acetyl-alpha-D-glucosamine. A Mg(2+)-binding site is contributed by Asn230. The tract at residues 233–253 is linker; it reads AQLAEAETVMQTRLRLAAMAA. The interval 254–452 is N-acetyltransferase; it reads GVTLIAPETV…KSRHRKPKAH (199 aa). 2 residues coordinate UDP-N-acetyl-alpha-D-glucosamine: Arg319 and Lys337. The active-site Proton acceptor is the His349. Positions 352 and 363 each coordinate UDP-N-acetyl-alpha-D-glucosamine. Residues Ala366, 372-373, Ser391, Ser409, and Arg426 each bind acetyl-CoA; that span reads NY.

This sequence in the N-terminal section; belongs to the N-acetylglucosamine-1-phosphate uridyltransferase family. In the C-terminal section; belongs to the transferase hexapeptide repeat family. Homotrimer. It depends on Mg(2+) as a cofactor.

The protein localises to the cytoplasm. The catalysed reaction is alpha-D-glucosamine 1-phosphate + acetyl-CoA = N-acetyl-alpha-D-glucosamine 1-phosphate + CoA + H(+). The enzyme catalyses N-acetyl-alpha-D-glucosamine 1-phosphate + UTP + H(+) = UDP-N-acetyl-alpha-D-glucosamine + diphosphate. The protein operates within nucleotide-sugar biosynthesis; UDP-N-acetyl-alpha-D-glucosamine biosynthesis; N-acetyl-alpha-D-glucosamine 1-phosphate from alpha-D-glucosamine 6-phosphate (route II): step 2/2. It functions in the pathway nucleotide-sugar biosynthesis; UDP-N-acetyl-alpha-D-glucosamine biosynthesis; UDP-N-acetyl-alpha-D-glucosamine from N-acetyl-alpha-D-glucosamine 1-phosphate: step 1/1. It participates in bacterial outer membrane biogenesis; LPS lipid A biosynthesis. Its function is as follows. Catalyzes the last two sequential reactions in the de novo biosynthetic pathway for UDP-N-acetylglucosamine (UDP-GlcNAc). The C-terminal domain catalyzes the transfer of acetyl group from acetyl coenzyme A to glucosamine-1-phosphate (GlcN-1-P) to produce N-acetylglucosamine-1-phosphate (GlcNAc-1-P), which is converted into UDP-GlcNAc by the transfer of uridine 5-monophosphate (from uridine 5-triphosphate), a reaction catalyzed by the N-terminal domain. This Rhodopseudomonas palustris (strain TIE-1) protein is Bifunctional protein GlmU.